The primary structure comprises 126 residues: Fluoride-specific ion channel FluC (126 aa).

Helical transmembrane passes span 4–24 (YLYI…VSGV), 35–55 (IGTF…TGLF), 67–87 (LLIL…MFES), and 100–120 (ALNI…GLAL). Na(+) is bound by residues Gly-75 and Thr-78.

It belongs to the fluoride channel Fluc/FEX (TC 1.A.43) family.

Its subcellular location is the cell inner membrane. It carries out the reaction fluoride(in) = fluoride(out). Na(+) is not transported, but it plays an essential structural role and its presence is essential for fluoride channel function. Its function is as follows. Fluoride-specific ion channel. Important for reducing fluoride concentration in the cell, thus reducing its toxicity. In Maridesulfovibrio salexigens (strain ATCC 14822 / DSM 2638 / NCIMB 8403 / VKM B-1763) (Desulfovibrio salexigens), this protein is Fluoride-specific ion channel FluC.